Here is a 38-residue protein sequence, read N- to C-terminus: Large ribosomal subunit protein bL36 (38 aa).

The protein belongs to the bacterial ribosomal protein bL36 family.

The protein is Large ribosomal subunit protein bL36 of Sorangium cellulosum (strain So ce56) (Polyangium cellulosum (strain So ce56)).